The sequence spans 169 residues: ATP synthase subunit b (169 aa).

A helical membrane pass occupies residues Ile3 to Asn23.

It belongs to the ATPase B chain family. F-type ATPases have 2 components, F(1) - the catalytic core - and F(0) - the membrane proton channel. F(1) has five subunits: alpha(3), beta(3), gamma(1), delta(1), epsilon(1). F(0) has three main subunits: a(1), b(2) and c(10-14). The alpha and beta chains form an alternating ring which encloses part of the gamma chain. F(1) is attached to F(0) by a central stalk formed by the gamma and epsilon chains, while a peripheral stalk is formed by the delta and b chains.

The protein resides in the cell inner membrane. Functionally, f(1)F(0) ATP synthase produces ATP from ADP in the presence of a proton or sodium gradient. F-type ATPases consist of two structural domains, F(1) containing the extramembraneous catalytic core and F(0) containing the membrane proton channel, linked together by a central stalk and a peripheral stalk. During catalysis, ATP synthesis in the catalytic domain of F(1) is coupled via a rotary mechanism of the central stalk subunits to proton translocation. In terms of biological role, component of the F(0) channel, it forms part of the peripheral stalk, linking F(1) to F(0). The protein is ATP synthase subunit b of Campylobacter curvus (strain 525.92).